An 827-amino-acid chain; its full sequence is Lon protease 2 (827 aa).

The segment at 1-22 is disordered; it reads MSDEKKKGSAASAMPTAMAPPG. A compositionally biased stretch (low complexity) spans 9-21; the sequence is SAASAMPTAMAPP. The Lon N-terminal domain maps to 33–227; that stretch reads LPILPLRNSV…LVLELLNRKR (195 aa). Residue 379-386 participates in ATP binding; that stretch reads GPPGVGKT. A Lon proteolytic domain is found at 615-796; that stretch reads TEVPGVATGL…DDVLKAALET (182 aa). Residues serine 702 and lysine 745 contribute to the active site. The segment at 799–827 is disordered; that stretch reads VGVAGTPGGEPGKEAPLPKPAESAPEVRA.

The protein belongs to the peptidase S16 family. As to quaternary structure, homohexamer. Organized in a ring with a central cavity.

The protein resides in the cytoplasm. It carries out the reaction Hydrolysis of proteins in presence of ATP.. In terms of biological role, ATP-dependent serine protease that mediates the selective degradation of mutant and abnormal proteins as well as certain short-lived regulatory proteins. Required for cellular homeostasis and for survival from DNA damage and developmental changes induced by stress. Degrades polypeptides processively to yield small peptide fragments that are 5 to 10 amino acids long. Binds to DNA in a double-stranded, site-specific manner. In Myxococcus xanthus, this protein is Lon protease 2.